Consider the following 463-residue polypeptide: DNA-binding protein K10 (463 aa).

Positions 1 to 13 (MVSKNQFYQNWTM) are enriched in polar residues. A disordered region spans residues 1 to 304 (MVSKNQFYQN…RNGPGPGPMM (304 aa)). Residues 14 to 50 (QSQQQHPHQMQQQFQQQQQPNLQHRNNQSNNNNCNNN) are compositionally biased toward low complexity. Polar residues predominate over residues 85-94 (QMMFSSSQMP). 7 consecutive repeat copies span residues 87 to 94 (MFSSSQMP), 95 to 102 (SDPLYIDF), 103 to 110 (SSPPPGFK), 111 to 118 (HNQVGSPK), 119 to 126 (KKSMKGIK), 127 to 134 (QQQHPSPN), and 135 to 142 (QQQPPSPN). The interval 87-142 (MFSSSQMPSDPLYIDFSSPPPGFKHNQVGSPKKKSMKGIKQQQHPSPNQQQPPSPN) is 7 X approximate tandem repeats. Low complexity predominate over residues 142-193 (NQQQHPSPNQQQHPSPNQQQHPNSNQQQHLSPNQQQGKMNNQNNNHMNQSQQ). Polar residues predominate over residues 194-214 (PFNNQMNGSDWQRHPGNNPNQ). Pro residues-rich tracts occupy residues 225–270 (GPPP…PPVP) and 282–291 (GGPPPPPPPL). Residues 397-416 (DELFAQYKGQRDKFVSLYEA) constitute a DNA-binding region (H-T-H motif). The interval 426 to 463 (AATVKAKDAKSDKDKNAISSQSAAPKAGSAKDATIPNP) is disordered. Residues 430-441 (KAKDAKSDKDKN) show a composition bias toward basic and acidic residues.

In terms of assembly, interacts (via N-terminus) with sqd; the interaction is direct and may be involved in localization of sqd to the oocyte during oogenesis.

Its subcellular location is the nucleus. In terms of biological role, may be involved in localization of sqd to the oocyte during oogenesis. This Drosophila melanogaster (Fruit fly) protein is DNA-binding protein K10 (fs(1)K10).